Consider the following 245-residue polypeptide: 1-(5-phosphoribosyl)-5-[(5-phosphoribosylamino)methylideneamino] imidazole-4-carboxamide isomerase (245 aa).

The Proton acceptor role is filled by Asp-7. The active-site Proton donor is Asp-129.

Belongs to the HisA/HisF family.

Its subcellular location is the cytoplasm. The enzyme catalyses 1-(5-phospho-beta-D-ribosyl)-5-[(5-phospho-beta-D-ribosylamino)methylideneamino]imidazole-4-carboxamide = 5-[(5-phospho-1-deoxy-D-ribulos-1-ylimino)methylamino]-1-(5-phospho-beta-D-ribosyl)imidazole-4-carboxamide. It participates in amino-acid biosynthesis; L-histidine biosynthesis; L-histidine from 5-phospho-alpha-D-ribose 1-diphosphate: step 4/9. This chain is 1-(5-phosphoribosyl)-5-[(5-phosphoribosylamino)methylideneamino] imidazole-4-carboxamide isomerase, found in Tolumonas auensis (strain DSM 9187 / NBRC 110442 / TA 4).